Reading from the N-terminus, the 311-residue chain is Porphobilinogen deaminase (311 aa).

At C242 the chain carries S-(dipyrrolylmethanemethyl)cysteine.

The protein belongs to the HMBS family. As to quaternary structure, monomer. The cofactor is dipyrromethane.

The catalysed reaction is 4 porphobilinogen + H2O = hydroxymethylbilane + 4 NH4(+). It functions in the pathway porphyrin-containing compound metabolism; protoporphyrin-IX biosynthesis; coproporphyrinogen-III from 5-aminolevulinate: step 2/4. Functionally, tetrapolymerization of the monopyrrole PBG into the hydroxymethylbilane pre-uroporphyrinogen in several discrete steps. The polypeptide is Porphobilinogen deaminase (hemC) (Vibrio cholerae serotype O1 (strain ATCC 39315 / El Tor Inaba N16961)).